Reading from the N-terminus, the 59-residue chain is uncharacterized protein (59 aa).

A disordered region spans residues 1–59 (MAKKPGENTGKNGGIYQEVGPRGGKKDNFATVKDNERLPPTTKPGNGWVLDKRTPDSKK). 2 stretches are compositionally biased toward basic and acidic residues: residues 24-37 (GKKDNFATVKDNER) and 50-59 (LDKRTPDSKK).

This is an uncharacterized protein from Salmonella phage P22 (Bacteriophage P22).